A 715-amino-acid chain; its full sequence is ATP-dependent zinc metalloprotease YME1L1 (715 aa).

Topologically, residues 1–237 (MFSLSSTVQP…TNDSLRRTRL (237 aa)) are mitochondrial matrix. Residues 34-54 (NTPVSQKQHRDTVPEHEAPSS) form a disordered region. Residues 41-52 (QHRDTVPEHEAP) show a composition bias toward basic and acidic residues. A helical membrane pass occupies residues 238-258 (ILFVLLLFGIYGLLKNPFLSV). The Mitochondrial intermembrane portion of the chain corresponds to 259–715 (RFRTTTGLDS…VLEGKKLEVR (457 aa)). Residues valine 283, threonine 325, glycine 326, lysine 327, threonine 328, and leucine 329 each coordinate ATP. Residue histidine 541 participates in Zn(2+) binding. Glutamate 542 is a catalytic residue. Histidine 545 and aspartate 619 together coordinate Zn(2+).

It in the N-terminal section; belongs to the AAA ATPase family. The protein in the C-terminal section; belongs to the peptidase M41 family. Homohexamer; may also form heterohexamers. Exists in several complexes of 600-1100 kDa. Interacts with AFG1L. Zn(2+) serves as cofactor. In terms of processing, proteolytically processed by mitochondrial processing peptidase (MPP) to generate the mature form. Degraded in an OMA1-dependent manner in response to oxidative stress. As to expression, detected in heart and skeletal muscle (at protein level).

Its subcellular location is the mitochondrion inner membrane. It is found in the mitochondrion. It catalyses the reaction ATP + H2O = ADP + phosphate + H(+). Its function is as follows. ATP-dependent metalloprotease that catalyzes the degradation of folded and unfolded proteins with a suitable degron sequence in the mitochondrial intermembrane region. Plays an important role in regulating mitochondrial morphology and function by cleaving OPA1 at position S2, giving rise to a form of OPA1 that promotes maintenance of normal mitochondrial structure and mitochondrial protein metabolism. Ensures cell proliferation, maintains normal cristae morphology and complex I respiration activity, promotes antiapoptotic activity and protects mitochondria from the accumulation of oxidatively damaged membrane proteins. Required to control the accumulation of nonassembled respiratory chain subunits (NDUFB6, OX4 and ND1). Involved in the mitochondrial adaptation in response to various signals, such as stress or developmental cues, by mediating degradation of mitochondrial proteins to rewire the mitochondrial proteome. Catalyzes degradation of mitochondrial proteins, such as translocases, lipid transfer proteins and metabolic enzymes in response to nutrient starvation in order to limit mitochondrial biogenesis: mechanistically, YME1L is activated by decreased phosphatidylethanolamine levels caused by LPIN1 activity in response to mTORC1 inhibition. Acts as a regulator of adult neural stem cell self-renewal by promoting mitochondrial proteome rewiring, preserving neural stem and progenitor cells self-renewal. Required for normal, constitutive degradation of PRELID1. Catalyzes the degradation of OMA1 in response to membrane depolarization. Mediates degradation of TIMM17A downstream of the integrated stress response (ISR). Catalyzes degradation of MICU1 when MICU1 is not assembled via an interchain disulfide. The polypeptide is ATP-dependent zinc metalloprotease YME1L1 (Yme1l1) (Mus musculus (Mouse)).